The sequence spans 888 residues: MALLMTCFVIVFAASQPCQTPDDLVAAASPGHIMIGGLFAIHEKILSSEEPRKPEIQKCASFEIPTFLQTLAMIHSIEMINNSTLLSGVKLGYEIYDTCTDITVAMAAALRCVSKFNSSREIVEFKCDYSNYVPRVKAVIGAGYSEISMAVSRTLSLQLMPQVSYESTAETLSDKIQFPSFLRSVSSDFYQTKAMAHLIQKSGWIIGILTTDDDYGLNTLAVQTAANNVCIAFREALPAFRSDITIEVRINQTLERTIAEAKVNVIVVFLSQFHVFNLFSKAIERNINKIWIVSSWSTSTIATIPDVKRIGKVVGFTFRRGNVSSFQSFLQNLCVFPSDNNKPLNEHAMLSACAHAKDSDLSQCVSNCSQGTLATKDSERNFFLRTDFLWDYTELGLVHSIQLAVLALSYAIQDLQADFQPWELLAVLKNVTFMEGWSSFHFYAHGAMNTGYNIVLWREINGHMSIKMAQYDLKNDVFIVTNQETKNEHRNLKKIQSKFFKECSSGQMKKTTKSQHTCCYECVTCPENHYSNQTDTDHYLLYNNETHWAPVGSTMCFEKEMEYLDSLAILLLALSLLGILFVLAIGIIFTRNLNTPVVKSSGELMVRYVILFCHFLNFAGTGFFIREPQSFTCKTRQTLICMSFTLCISYILMKSLKILLAFSSKLQNFLKCFYKPIPIIFTCTGIVVVCTLLIFAAPAVGQNVSLPRVIIFECEEGSILAFGSMLGYAAILAFMCFICAFKGRKFPENYNEAKFITFGMLIYFIAWITFIPIYTFGKYMLVVEIIIILISNYGICCMFFPKCYVILSKQETNTKSVFLKMIYSYSPHSAGSLAMSHSNITITNRTSAGGSAVQQKSRDLQLQGFAHICRENAMCRTKALPPKRISSI.

The N-terminal stretch at 1 to 15 is a signal peptide; the sequence is MALLMTCFVIVFAAS. Over 16-568 the chain is Extracellular; the sequence is QPCQTPDDLV…KEMEYLDSLA (553 aa). 4 N-linked (GlcNAc...) asparagine glycosylation sites follow: N251, N322, N532, and N544. A helical membrane pass occupies residues 569–589; that stretch reads ILLLALSLLGILFVLAIGIIF. The Cytoplasmic portion of the chain corresponds to 590–604; the sequence is TRNLNTPVVKSSGEL. Residues 605–625 traverse the membrane as a helical segment; it reads MVRYVILFCHFLNFAGTGFFI. Over 626-641 the chain is Extracellular; it reads REPQSFTCKTRQTLIC. The chain crosses the membrane as a helical span at residues 642-662; the sequence is MSFTLCISYILMKSLKILLAF. The Cytoplasmic segment spans residues 663–676; that stretch reads SSKLQNFLKCFYKP. The helical transmembrane segment at 677-697 threads the bilayer; the sequence is IPIIFTCTGIVVVCTLLIFAA. The Extracellular portion of the chain corresponds to 698–718; the sequence is PAVGQNVSLPRVIIFECEEGS. A helical membrane pass occupies residues 719-739; it reads ILAFGSMLGYAAILAFMCFIC. Residues 740–754 lie on the Cytoplasmic side of the membrane; it reads AFKGRKFPENYNEAK. A helical transmembrane segment spans residues 755–775; it reads FITFGMLIYFIAWITFIPIYT. Residues 776-779 are Extracellular-facing; that stretch reads FGKY. A helical transmembrane segment spans residues 780–800; that stretch reads MLVVEIIIILISNYGICCMFF. The Cytoplasmic segment spans residues 801 to 888; the sequence is PKCYVILSKQ…ALPPKRISSI (88 aa).

It belongs to the G-protein coupled receptor 3 family. As to quaternary structure, homodimer; disulfide-linked.

Its subcellular location is the cell membrane. In terms of biological role, receptor activated by multiple ligands, including osteocalcin (BGLAP), basic amino acids, and various cations. Activated by amino acids with a preference for basic amino acids such as L-Lys, L-Arg and L-ornithine but also by small and polar amino acids. The L-alpha amino acids respond is augmented by divalent cations Ca(2+) and Mg(2+). Seems to act through a G(q)/G(11) and G(i)-coupled pathway. Regulates testosterone production by acting as a ligand for uncarboxylated osteocalcin hormone: osteocalcin-binding at the surface of Leydig cells initiates a signaling response that promotes the expression of enzymes required for testosterone synthesis in a CREB-dependent manner. Mediates the non-genomic effects of androgens in multiple tissue. May coordinate nutritional and hormonal anabolic signals through the sensing of extracellular amino acids, osteocalcin, divalent ions and its responsiveness to anabolic steroids. The sequence is that of G-protein coupled receptor family C group 6 member A (GPRC6A) from Bos taurus (Bovine).